The chain runs to 285 residues: Inositol oxygenase (285 aa).

Arg-29 contributes to the substrate binding site. Ser-33 carries the phosphoserine modification. 85-88 (DESD) lines the substrate pocket. Fe cation contacts are provided by His-98, His-123, and Asp-124. Substrate-binding positions include Lys-127 and 141-142 (GD). Residues His-194, His-220, and Asp-253 each coordinate Fe cation. 220 to 221 (HS) serves as a coordination point for substrate.

Belongs to the myo-inositol oxygenase family. It depends on Fe cation as a cofactor. As to expression, kidney specific. Renal proximal tubules.

It localises to the cytoplasm. The catalysed reaction is myo-inositol + O2 = D-glucuronate + H2O + H(+). It functions in the pathway polyol metabolism; myo-inositol degradation into D-glucuronate; D-glucuronate from myo-inositol: step 1/1. The sequence is that of Inositol oxygenase (Miox) from Mus musculus (Mouse).